The sequence spans 217 residues: MTLVIKLSGRVFEDEELIFKYARVIKAYSGKVGVVTGGGEIARRYISIAKRGGASYTFQDLLGIYASRLNALLFISLLEDACPIVPTNIEEFLDAWRRCRITVTGGFQPGQSTATVAALVAEAVKAPVLLNAANIDAVYSEDPKINPNAKRLPVLTYDEFERILKSSVLPGGYELMDTWSISILKRNCITTYIFDGRKPEHIEAVMRGENPGSKITC.

Position 6–10 (6–10) interacts with ATP; sequence KLSGR. Gly38 serves as a coordination point for UMP. Positions 39 and 43 each coordinate ATP. Residues Asp60 and 107–113 each bind UMP; that span reads FQPGQST. 3 residues coordinate ATP: Asn134, Tyr139, and Asp142.

This sequence belongs to the UMP kinase family. As to quaternary structure, homohexamer.

The protein resides in the cytoplasm. It carries out the reaction UMP + ATP = UDP + ADP. Its pathway is pyrimidine metabolism; CTP biosynthesis via de novo pathway; UDP from UMP (UMPK route): step 1/1. Its activity is regulated as follows. Inhibited by UTP. In terms of biological role, catalyzes the reversible phosphorylation of UMP to UDP. The polypeptide is Uridylate kinase (Pyrobaculum islandicum (strain DSM 4184 / JCM 9189 / GEO3)).